A 271-amino-acid chain; its full sequence is DNA repair protein RecO (271 aa).

Belongs to the RecO family.

Involved in DNA repair and RecF pathway recombination. The polypeptide is DNA repair protein RecO (Synechococcus sp. (strain CC9311)).